An 85-amino-acid polypeptide reads, in one-letter code: U4-theraphotoxin-Hhn1g (85 aa).

Positions methionine 1–alanine 22 are cleaved as a signal peptide. A propeptide spanning residues glutamate 23–arginine 48 is cleaved from the precursor. Intrachain disulfides connect cysteine 52–cysteine 66, cysteine 56–cysteine 77, and cysteine 71–cysteine 82.

The protein belongs to the neurotoxin 12 (Hwtx-2) family. 02 (Hwtx-2) subfamily. In terms of tissue distribution, expressed by the venom gland.

It is found in the secreted. Postsynaptic neurotoxin. In Cyriopagopus hainanus (Chinese bird spider), this protein is U4-theraphotoxin-Hhn1g.